A 116-amino-acid polypeptide reads, in one-letter code: MARVKGGTVTRARRKKWIKLAKGYFGHKSVGYKVAKQAVVKSWTYAFRDRKQVKRNFRKLWIARINAAVRPHGLSYSQFINGLKKAEVLINRKMLSELAINQPQTFEKLVKLVQGK.

This sequence belongs to the bacterial ribosomal protein bL20 family.

Binds directly to 23S ribosomal RNA and is necessary for the in vitro assembly process of the 50S ribosomal subunit. It is not involved in the protein synthesizing functions of that subunit. The polypeptide is Large ribosomal subunit protein bL20 (Mycoplasmopsis synoviae (strain 53) (Mycoplasma synoviae)).